The primary structure comprises 317 residues: Olfactory receptor 5K17 (317 aa).

The Extracellular segment spans residues 1–28 (MMKANHSLTVEFILIGFSDHTDLKTLLF). Asparagine 5 carries an N-linked (GlcNAc...) asparagine glycan. A helical transmembrane segment spans residues 29–49 (LLFSAIYLVTIVGNLGLVALI). At 50–56 (YMEPRLH) the chain is on the cytoplasmic side. Residues 57–77 (TPMYIFLGNLALMDSCCSCAI) form a helical membrane-spanning segment. Over 78-93 (TPKMLENFFSVDRRIS) the chain is Extracellular. Residues 94–114 (LYECMVQFYFLCLAETADCFL) traverse the membrane as a helical segment. Cysteine 97 and cysteine 189 form a disulfide bridge. Residues 115–144 (LAAMAYDRYVAICNPLQYHTMMSKKLSIQM) lie on the Cytoplasmic side of the membrane. A helical membrane pass occupies residues 145-165 (SIGTFIASNLHSLIHTGCLLR). Topologically, residues 166–198 (LNFCKSRRIDHFFCDILPLYKLSCTDPFINELM) are extracellular. A helical membrane pass occupies residues 199–219 (LYIFSMPIQVFTITTVLVSYS). At 220–239 (CILLTVFKMKSKDGRGKAFS) the chain is on the cytoplasmic side. Residues 240–259 (TCASHFFSVSIFYICLLMYI) form a helical membrane-spanning segment. At 260-268 (GPSKNSNKD) the chain is on the extracellular side. The helical transmembrane segment at 269–289 (IPVGVFYTIVIPLLNPFIYSL) threads the bilayer. The Cytoplasmic portion of the chain corresponds to 290-317 (RNKEVVNAVKKVMKTHSIFKNSSASIAH).

This sequence belongs to the G-protein coupled receptor 1 family.

The protein localises to the cell membrane. Potential odorant receptor. The sequence is that of Olfactory receptor 5K17 from Mus musculus (Mouse).